Consider the following 1108-residue polypeptide: AP-3 complex subunit beta (1108 aa).

4 HEAT repeats span residues 90–127 (DSAL…IDII), 327–363 (IEAQ…LRPS), 397–433 (ENIG…STVP), and 434–471 (DVTE…LNAT). A compositionally biased stretch (basic and acidic residues) spans 480–490 (KEKEKEKDVKE). Disordered stretches follow at residues 480–501 (KEKE…HSSS), 736–797 (DEEE…YDGE), and 811–835 (LFGI…GEEE). 2 stretches are compositionally biased toward acidic residues: residues 736–764 (DEEE…EDFF) and 780–797 (YDED…YDGE).

It belongs to the adaptor complexes large subunit family. As to quaternary structure, adaptor protein complex 3 (AP-3) is a heterotetramer composed of two large adaptins (delta-type subunit and beta-type subunit), a medium adaptin (mu-type subunit) and a small adaptin (sigma-type subunit).

Its subcellular location is the endosome membrane. In terms of biological role, part of the AP-3 complex, an adaptor-related complex which is essential for the compartmentalization of the endocytic pathway. The sequence is that of AP-3 complex subunit beta (ap3b-1) from Dictyostelium discoideum (Social amoeba).